A 213-amino-acid chain; its full sequence is ATP-dependent Clp protease proteolytic subunit 1 (213 aa).

Catalysis depends on serine 114, which acts as the Nucleophile. Residue histidine 139 is part of the active site.

This sequence belongs to the peptidase S14 family. In terms of assembly, fourteen ClpP subunits assemble into 2 heptameric rings which stack back to back to give a disk-like structure with a central cavity, resembling the structure of eukaryotic proteasomes.

It localises to the cytoplasm. It catalyses the reaction Hydrolysis of proteins to small peptides in the presence of ATP and magnesium. alpha-casein is the usual test substrate. In the absence of ATP, only oligopeptides shorter than five residues are hydrolyzed (such as succinyl-Leu-Tyr-|-NHMec, and Leu-Tyr-Leu-|-Tyr-Trp, in which cleavage of the -Tyr-|-Leu- and -Tyr-|-Trp bonds also occurs).. Its function is as follows. Cleaves peptides in various proteins in a process that requires ATP hydrolysis. Has a chymotrypsin-like activity. Plays a major role in the degradation of misfolded proteins. The chain is ATP-dependent Clp protease proteolytic subunit 1 from Pseudomonas aeruginosa (strain ATCC 15692 / DSM 22644 / CIP 104116 / JCM 14847 / LMG 12228 / 1C / PRS 101 / PAO1).